Here is a 727-residue protein sequence, read N- to C-terminus: Phosphoribosylformylglycinamidine synthase subunit PurL (727 aa).

Residue His-47 is part of the active site. ATP is bound by residues Tyr-50 and Lys-89. Glu-91 contributes to the Mg(2+) binding site. Residues 92-95 and Arg-114 contribute to the substrate site; that span reads SHNH. The active-site Proton acceptor is His-93. Asp-115 serves as a coordination point for Mg(2+). Residue Gln-238 participates in substrate binding. Residue Asp-266 coordinates Mg(2+). 310–312 provides a ligand contact to substrate; the sequence is ESQ. ATP is bound by residues Asp-490 and Gly-527. Asn-528 contacts Mg(2+). Ser-530 serves as a coordination point for substrate.

The protein belongs to the FGAMS family. As to quaternary structure, monomer. Part of the FGAM synthase complex composed of 1 PurL, 1 PurQ and 2 PurS subunits.

It is found in the cytoplasm. It catalyses the reaction N(2)-formyl-N(1)-(5-phospho-beta-D-ribosyl)glycinamide + L-glutamine + ATP + H2O = 2-formamido-N(1)-(5-O-phospho-beta-D-ribosyl)acetamidine + L-glutamate + ADP + phosphate + H(+). Its pathway is purine metabolism; IMP biosynthesis via de novo pathway; 5-amino-1-(5-phospho-D-ribosyl)imidazole from N(2)-formyl-N(1)-(5-phospho-D-ribosyl)glycinamide: step 1/2. Part of the phosphoribosylformylglycinamidine synthase complex involved in the purines biosynthetic pathway. Catalyzes the ATP-dependent conversion of formylglycinamide ribonucleotide (FGAR) and glutamine to yield formylglycinamidine ribonucleotide (FGAM) and glutamate. The FGAM synthase complex is composed of three subunits. PurQ produces an ammonia molecule by converting glutamine to glutamate. PurL transfers the ammonia molecule to FGAR to form FGAM in an ATP-dependent manner. PurS interacts with PurQ and PurL and is thought to assist in the transfer of the ammonia molecule from PurQ to PurL. The sequence is that of Phosphoribosylformylglycinamidine synthase subunit PurL from Acidiphilium cryptum (strain JF-5).